The primary structure comprises 54 residues: MAVQKSKPTRSKRGMRRSHDSLKEITLSKDKFSGEMHIRHHITAKGYYRGKKVI.

Positions 1–24 are disordered; the sequence is MAVQKSKPTRSKRGMRRSHDSLKE. Over residues 7 to 16 the composition is skewed to basic residues; that stretch reads KPTRSKRGMR.

Belongs to the bacterial ribosomal protein bL32 family.

This is Large ribosomal subunit protein bL32 from Buchnera aphidicola subsp. Schizaphis graminum (strain Sg).